We begin with the raw amino-acid sequence, 24 residues long: RuBisCO large subunit-binding protein subunit beta, chloroplastic (24 aa).

Belongs to the chaperonin (HSP60) family. As to quaternary structure, oligomer of probably six alpha and six beta subunits.

It localises to the plastid. It is found in the chloroplast. In terms of biological role, this protein binds RuBisCO small and large subunits and is implicated in the assembly of the enzyme oligomer. This chain is RuBisCO large subunit-binding protein subunit beta, chloroplastic, found in Populus euphratica (Euphrates poplar).